We begin with the raw amino-acid sequence, 111 residues long: Large ribosomal subunit protein uL22 (111 aa).

This sequence belongs to the universal ribosomal protein uL22 family. As to quaternary structure, part of the 50S ribosomal subunit.

Its function is as follows. This protein binds specifically to 23S rRNA; its binding is stimulated by other ribosomal proteins, e.g. L4, L17, and L20. It is important during the early stages of 50S assembly. It makes multiple contacts with different domains of the 23S rRNA in the assembled 50S subunit and ribosome. The globular domain of the protein is located near the polypeptide exit tunnel on the outside of the subunit, while an extended beta-hairpin is found that lines the wall of the exit tunnel in the center of the 70S ribosome. The chain is Large ribosomal subunit protein uL22 from Stenotrophomonas maltophilia (strain R551-3).